The primary structure comprises 460 residues: Adenylosuccinate lyase (460 aa).

Residues R15–Y16, N88–D90, and T120–S121 contribute to the N(6)-(1,2-dicarboxyethyl)-AMP site. The active-site Proton donor/acceptor is the H169. Residue Q245 coordinates N(6)-(1,2-dicarboxyethyl)-AMP. S293 (proton donor/acceptor) is an active-site residue. N(6)-(1,2-dicarboxyethyl)-AMP contacts are provided by residues S294, K299–N301, N307, R333, and S338–R342.

This sequence belongs to the lyase 1 family. Adenylosuccinate lyase subfamily. Homotetramer. Residues from neighboring subunits contribute catalytic and substrate-binding residues to each active site.

It carries out the reaction N(6)-(1,2-dicarboxyethyl)-AMP = fumarate + AMP. It catalyses the reaction (2S)-2-[5-amino-1-(5-phospho-beta-D-ribosyl)imidazole-4-carboxamido]succinate = 5-amino-1-(5-phospho-beta-D-ribosyl)imidazole-4-carboxamide + fumarate. The protein operates within purine metabolism; AMP biosynthesis via de novo pathway; AMP from IMP: step 2/2. It functions in the pathway purine metabolism; IMP biosynthesis via de novo pathway; 5-amino-1-(5-phospho-D-ribosyl)imidazole-4-carboxamide from 5-amino-1-(5-phospho-D-ribosyl)imidazole-4-carboxylate: step 2/2. Its function is as follows. Catalyzes two reactions in de novo purine nucleotide biosynthesis. Catalyzes the breakdown of 5-aminoimidazole- (N-succinylocarboxamide) ribotide (SAICAR or 2-[5-amino-1-(5-phospho-beta-D-ribosyl)imidazole-4-carboxamido]succinate) to 5-aminoimidazole-4-carboxamide ribotide (AICAR or 5-amino-1-(5-phospho-beta-D-ribosyl)imidazole-4-carboxamide) and fumarate, and of adenylosuccinate (ADS or N(6)-(1,2-dicarboxyethyl)-AMP) to adenosine monophosphate (AMP) and fumarate. This chain is Adenylosuccinate lyase (purB), found in Buchnera aphidicola subsp. Baizongia pistaciae (strain Bp).